A 207-amino-acid chain; its full sequence is Small ribosomal subunit protein uS4 (207 aa).

Residues lysine 31–glutamine 55 form a disordered region. The segment covering glycine 42–glycine 53 has biased composition (polar residues). Residues serine 97–leucine 160 enclose the S4 RNA-binding domain.

Belongs to the universal ribosomal protein uS4 family. In terms of assembly, part of the 30S ribosomal subunit. Contacts protein S5. The interaction surface between S4 and S5 is involved in control of translational fidelity.

Its function is as follows. One of the primary rRNA binding proteins, it binds directly to 16S rRNA where it nucleates assembly of the body of the 30S subunit. In terms of biological role, with S5 and S12 plays an important role in translational accuracy. The protein is Small ribosomal subunit protein uS4 of Burkholderia vietnamiensis (strain G4 / LMG 22486) (Burkholderia cepacia (strain R1808)).